Consider the following 725-residue polypeptide: Ophiobolin F synthase (725 aa).

A (7Z)-ophiobola-7,19-dien-3-ol synthase region spans residues 1 to 322 (MEYKYSTIVD…RYHADAKFNE (322 aa)). Residues Asp-93 and Asp-97 each coordinate Mg(2+). Asp-93 provides a ligand contact to substrate. Residues 93-97 (DDEID) carry the DDXXD 1 motif. Substrate contacts are provided by residues 182–185 (RCMD), Asn-226, 230–234 (SYEKE), and 313–314 (RY). The NSE/DTE signature appears at 226–234 (NDLFSYEKE). Residues 323–725 (LQMLRAEHGV…LRMMLELLKV (403 aa)) are geranylfarnesyl diphosphate synthase. The segment at 362–388 (GVNGVNGKRKRSGEETADDARTNGNGI) is disordered. The segment covering 373–382 (SGEETADDAR) has biased composition (basic and acidic residues). Residues Lys-436, Arg-439, and His-468 each contribute to the isopentenyl diphosphate site. Mg(2+)-binding residues include Asp-475 and Asp-479. A DDXXD 2 motif is present at residues 475–479 (DDIED). Arg-484 is a binding site for dimethylallyl diphosphate. Arg-485 is an isopentenyl diphosphate binding site. Dimethylallyl diphosphate is bound by residues Lys-562, Thr-563, Gln-601, Asn-608, Lys-618, and Lys-628.

It in the N-terminal section; belongs to the terpene synthase family. This sequence in the C-terminal section; belongs to the FPP/GGPP synthase family. Mg(2+) serves as cofactor.

The catalysed reaction is isopentenyl diphosphate + (2E,6E)-farnesyl diphosphate = (2E,6E,10E)-geranylgeranyl diphosphate + diphosphate. The enzyme catalyses isopentenyl diphosphate + (2E,6E,10E)-geranylgeranyl diphosphate = (2E,6E,10E,14E)-geranylfarnesyl diphosphate + diphosphate. It catalyses the reaction (2E,6E,10E,14E)-geranylfarnesyl diphosphate + H2O = ophiobolin F + diphosphate. The protein operates within secondary metabolite biosynthesis; terpenoid biosynthesis. Functionally, bifunctional sesterterpene synthase that converts isopentenyl diphosphate (IPP) and dimethylallyl diphosphate (DMAPP) into ophiobolin F. The C-terminal prenyltransferase (PT) domain of AcldOS converts isopentenyl diphosphate and dimethylallyl diphosphate into geranylfarnesyl diphosphate (GFPP), whereas the N-terminal terpene cyclase (TC) domain catalyzes the cyclization of GFPP to ophiobolin F. This is Ophiobolin F synthase from Aspergillus calidoustus.